A 485-amino-acid chain; its full sequence is G2/mitotic-specific cyclin-A1 (485 aa).

Residues 1–24 (MRSALSLKPSNGNAAKSQAVNNKN) are disordered. Positions 8–24 (KPSNGNAAKSQAVNNKN) are enriched in polar residues.

This sequence belongs to the cyclin family. Cyclin AB subfamily. As to expression, expressed in the cell lineages ABarp, C and E as well as the NSM neuroblasts.

In terms of biological role, involved in the control of the cell cycle after S phase. May bind to and activate cdk-1 and/or cdk-2 to promote cell cycle progression. Necessary for embryogenesis. The sequence is that of G2/mitotic-specific cyclin-A1 (cya-1) from Caenorhabditis elegans.